Consider the following 295-residue polypeptide: Acetyl-coenzyme A carboxylase carboxyl transferase subunit beta (295 aa).

Residues 1 to 20 (MSWLSKLMPSGIRTENTPAK) are disordered. The CoA carboxyltransferase N-terminal domain occupies 28–295 (LWEKCSNCGS…QPHPQDADAA (268 aa)). 4 residues coordinate Zn(2+): C32, C35, C51, and C54. The C4-type zinc finger occupies 32–54 (CSNCGSALYGPELEENLEVCPKC).

It belongs to the AccD/PCCB family. In terms of assembly, acetyl-CoA carboxylase is a heterohexamer composed of biotin carboxyl carrier protein (AccB), biotin carboxylase (AccC) and two subunits each of ACCase subunit alpha (AccA) and ACCase subunit beta (AccD). It depends on Zn(2+) as a cofactor.

The protein localises to the cytoplasm. The enzyme catalyses N(6)-carboxybiotinyl-L-lysyl-[protein] + acetyl-CoA = N(6)-biotinyl-L-lysyl-[protein] + malonyl-CoA. Its pathway is lipid metabolism; malonyl-CoA biosynthesis; malonyl-CoA from acetyl-CoA: step 1/1. In terms of biological role, component of the acetyl coenzyme A carboxylase (ACC) complex. Biotin carboxylase (BC) catalyzes the carboxylation of biotin on its carrier protein (BCCP) and then the CO(2) group is transferred by the transcarboxylase to acetyl-CoA to form malonyl-CoA. The sequence is that of Acetyl-coenzyme A carboxylase carboxyl transferase subunit beta from Xanthomonas oryzae pv. oryzae (strain MAFF 311018).